Here is a 431-residue protein sequence, read N- to C-terminus: Phosphate regulon sensor protein PhoR (431 aa).

Topologically, residues Met-1–Arg-9 are cytoplasmic. A helical transmembrane segment spans residues Leu-10–Phe-28. Topologically, residues Gly-29–Pro-32 are periplasmic. The helical transmembrane segment at Trp-33–Leu-51 threads the bilayer. Residues Arg-52–Asp-431 are Cytoplasmic-facing. The region spanning Leu-96–Gly-172 is the PAS domain. The Histidine kinase domain occupies Asn-210 to Leu-425. A Phosphohistidine; by autocatalysis modification is found at His-213.

It localises to the cell inner membrane. The catalysed reaction is ATP + protein L-histidine = ADP + protein N-phospho-L-histidine.. Its function is as follows. Member of the two-component regulatory system PhoR/PhoB involved in the phosphate regulon genes expression. PhoR may function as a membrane-associated protein kinase that phosphorylates PhoB in response to environmental signals. This is Phosphate regulon sensor protein PhoR (phoR) from Escherichia coli (strain K12).